A 130-amino-acid chain; its full sequence is Small ribosomal subunit protein uS9 (130 aa).

Positions 104-130 are disordered; the sequence is LTRDPRMKERKKYGLKKARRAPQFSKR. Over residues 111 to 130 the composition is skewed to basic residues; that stretch reads KERKKYGLKKARRAPQFSKR.

It belongs to the universal ribosomal protein uS9 family.

The polypeptide is Small ribosomal subunit protein uS9 (Ruminiclostridium cellulolyticum (strain ATCC 35319 / DSM 5812 / JCM 6584 / H10) (Clostridium cellulolyticum)).